The following is a 186-amino-acid chain: ADP-ribosylation factor-like protein 6 (186 aa).

Gly-2 is lipidated: N-myristoyl glycine. GTP contacts are provided by residues 24 to 31, 69 to 73, and 130 to 133; these read GLDNSGKT, DMSGQ, and NKMD.

Belongs to the small GTPase superfamily. Arf family. In terms of assembly, interacts with SEC61B, ARL6IP1, ARL6IP2, ARL6IP3, ARL6IP4 ARL6IP5 and ARL6IP6. Interacts (GTP-bound form) with the BBSome a complex that contains BBS1, BBS2, BBS4, BBS5, BBS7, BBS8/TTC8, BBS9 and BBIP10. Interacts (GTP-free form) with IFT27.

The protein localises to the cell projection. It is found in the cilium membrane. The protein resides in the cytoplasm. It localises to the cytoskeleton. Its subcellular location is the cilium axoneme. The protein localises to the cilium basal body. Functionally, involved in membrane protein trafficking at the base of the ciliary organelle. Mediates recruitment onto plasma membrane of the BBSome complex which would constitute a coat complex required for sorting of specific membrane proteins to the primary cilia. Together with the BBSome complex and LTZL1, controls SMO ciliary trafficking and contributes to the sonic hedgehog (SHH) pathway regulation. May regulate cilia assembly and disassembly and subsequent ciliary signaling events such as the Wnt signaling cascade. Isoform 2 may be required for proper retinal function and organization. This chain is ADP-ribosylation factor-like protein 6 (ARL6), found in Bos taurus (Bovine).